The chain runs to 208 residues: FMN-dependent NADH:quinone oxidoreductase (208 aa).

FMN is bound by residues 17-19 (SNS), 99-102 (MWNL), and 143-146 (SRGG).

The protein belongs to the azoreductase type 1 family. In terms of assembly, homodimer. It depends on FMN as a cofactor.

The enzyme catalyses 2 a quinone + NADH + H(+) = 2 a 1,4-benzosemiquinone + NAD(+). It catalyses the reaction N,N-dimethyl-1,4-phenylenediamine + anthranilate + 2 NAD(+) = 2-(4-dimethylaminophenyl)diazenylbenzoate + 2 NADH + 2 H(+). Quinone reductase that provides resistance to thiol-specific stress caused by electrophilic quinones. Its function is as follows. Also exhibits azoreductase activity. Catalyzes the reductive cleavage of the azo bond in aromatic azo compounds to the corresponding amines. This Staphylococcus carnosus (strain TM300) protein is FMN-dependent NADH:quinone oxidoreductase.